A 320-amino-acid polypeptide reads, in one-letter code: MENFPIINLEKLNGSERDATMEMIKDACENWGFFELVNHGIPHEVMDTVEKLTKGHYKKCMEQRFKELVASKGLEAVQAEVTDLDWESTFFLRHLPVSNISEVPDLDDEYREVMRDFAKRLEKLAEELLDLLCENLGLEKGYLKKAFYGSKGPNFGTKVSNYPPCPKPDLIKGLRAHTDAGGIILLFQDDKVSGLQLLKDGQWIDVPPMRHSIVVNLGDQLEVITNGKYKSVLHRVIAQTDGTRMSLASFYNPGSDAVIYPAPTLVEKEADQECKQVYPKFVFDDYMKLYAGLKFQAKEPRFEAMKAREADVKSDPIATA.

The Fe2OG dioxygenase domain occupies 153 to 253; sequence PNFGTKVSNY…RMSLASFYNP (101 aa). H177, D179, and H234 together coordinate Fe cation.

This sequence belongs to the iron/ascorbate-dependent oxidoreductase family. Fe cation is required as a cofactor.

The enzyme catalyses 1-aminocyclopropane-1-carboxylate + L-ascorbate + O2 = ethene + L-dehydroascorbate + hydrogen cyanide + CO2 + 2 H2O. It functions in the pathway alkene biosynthesis; ethylene biosynthesis via S-adenosyl-L-methionine; ethylene from S-adenosyl-L-methionine: step 2/2. This chain is 1-aminocyclopropane-1-carboxylate oxidase 3 (ACO3), found in Petunia hybrida (Petunia).